The following is a 572-amino-acid chain: Proline--tRNA ligase (572 aa).

This sequence belongs to the class-II aminoacyl-tRNA synthetase family. ProS type 1 subfamily. In terms of assembly, homodimer.

Its subcellular location is the cytoplasm. It catalyses the reaction tRNA(Pro) + L-proline + ATP = L-prolyl-tRNA(Pro) + AMP + diphosphate. In terms of biological role, catalyzes the attachment of proline to tRNA(Pro) in a two-step reaction: proline is first activated by ATP to form Pro-AMP and then transferred to the acceptor end of tRNA(Pro). As ProRS can inadvertently accommodate and process non-cognate amino acids such as alanine and cysteine, to avoid such errors it has two additional distinct editing activities against alanine. One activity is designated as 'pretransfer' editing and involves the tRNA(Pro)-independent hydrolysis of activated Ala-AMP. The other activity is designated 'posttransfer' editing and involves deacylation of mischarged Ala-tRNA(Pro). The misacylated Cys-tRNA(Pro) is not edited by ProRS. The chain is Proline--tRNA ligase from Klebsiella pneumoniae subsp. pneumoniae (strain ATCC 700721 / MGH 78578).